The sequence spans 55 residues: ATP synthase F(0) complex subunit 8 (55 aa).

A helical membrane pass occupies residues 4 to 24 (LLPTPWFTIFIYAWMVLLAVI).

Belongs to the ATPase protein 8 family. As to quaternary structure, component of the ATP synthase complex composed at least of ATP5F1A/subunit alpha, ATP5F1B/subunit beta, ATP5MC1/subunit c (homooctomer), MT-ATP6/subunit a, MT-ATP8/subunit 8, ATP5ME/subunit e, ATP5MF/subunit f, ATP5MG/subunit g, ATP5MK/subunit k, ATP5MJ/subunit j, ATP5F1C/subunit gamma, ATP5F1D/subunit delta, ATP5F1E/subunit epsilon, ATP5PF/subunit F6, ATP5PB/subunit b, ATP5PD/subunit d, ATP5PO/subunit OSCP. ATP synthase complex consists of a soluble F(1) head domain (subunits alpha(3) and beta(3)) - the catalytic core - and a membrane F(0) domain - the membrane proton channel (subunits c, a, 8, e, f, g, k and j). These two domains are linked by a central stalk (subunits gamma, delta, and epsilon) rotating inside the F1 region and a stationary peripheral stalk (subunits F6, b, d, and OSCP).

The protein resides in the mitochondrion membrane. Its function is as follows. Subunit 8, of the mitochondrial membrane ATP synthase complex (F(1)F(0) ATP synthase or Complex V) that produces ATP from ADP in the presence of a proton gradient across the membrane which is generated by electron transport complexes of the respiratory chain. ATP synthase complex consist of a soluble F(1) head domain - the catalytic core - and a membrane F(1) domain - the membrane proton channel. These two domains are linked by a central stalk rotating inside the F(1) region and a stationary peripheral stalk. During catalysis, ATP synthesis in the catalytic domain of F(1) is coupled via a rotary mechanism of the central stalk subunits to proton translocation. In vivo, can only synthesize ATP although its ATP hydrolase activity can be activated artificially in vitro. Part of the complex F(0) domain. The polypeptide is ATP synthase F(0) complex subunit 8 (Dicentrarchus labrax (European seabass)).